Reading from the N-terminus, the 74-residue chain is O-conotoxin GeXXXIA (74 aa).

A signal peptide spans 1–22; the sequence is MKLTCVLIITVLFLTACQLTTA. Positions 23-33 are excised as a propeptide; the sequence is VTYSRGEHKHR.

The protein belongs to the conotoxin O1 superfamily. As to quaternary structure, homodimer; disulfide-linked. In terms of processing, may contain 2 intrachain disulfide bonds and probably one interchain disulfide bond forming the homodimer. The disulfide pairing is not important for activity towards the different nAChR subtypes, since this peptide without disulfide bond or with different disulfide bonds shows the same activity. Expressed by the venom duct.

It localises to the secreted. Its function is as follows. The activity of this natural homodimer has not been tested due to low abundance. The synthetic linear peptide has been refolded, giving 4 different monomeric isomers (m1 to m4) with 2 disulfide bonds each. All isomers potently inhibit rat alpha-1-beta-1-delta-epsilon/CHRNA1-CHRNB1-CHRND-CHRNE and human alpha-9-alpha-10/CHRNA9-CHRNA10 nicotinic acetylcholine receptors (nAChR). In addition, they show a modest inhibition at human alpha-3-beta-2/CHRNA3-CHRNB2, alpha-3-beta-4/CHRNA3-CHRNB4, alpha-7/CHRNA7, and alpha-4-beta-4/CHRNA4-CHRNB4. The synthetic monomer peptide without disulfide bonds shows a potent activity on alpha-9-alpha-10/CHRNA9 and CHRNA10 (IC(50)=16.2 nM). This linear peptide does not act as a competitive antagonist, or as a channel pore blocker of nAChR. The chain is O-conotoxin GeXXXIA from Conus generalis (General cone).